The chain runs to 257 residues: 24 kDa outer membrane protein (257 aa).

Residues 1–21 (MKNKSKLLACCLMALPISSFS) form the signal peptide.

It belongs to the MipA/OmpV family.

It is found in the cell outer membrane. The protein is 24 kDa outer membrane protein of Pasteurella multocida (strain Pm70).